Consider the following 516-residue polypeptide: GPI mannosyltransferase 4 (516 aa).

The Lumenal portion of the chain corresponds to 1 to 5 (MMRYQ). Residues 6 to 26 (WWLYLVYAIGLMLCLGPSYIH) traverse the membrane as a helical segment. Residues 27–60 (PDEHFQCIEILAMQFMKVKGTIPWEFKSKFAARS) lie on the Cytoplasmic side of the membrane. Residues 61–81 (YGPLLLVYGPLFTILESFPEI) form a helical membrane-spanning segment. Over 82–175 (QDNPALILYS…IQRSNFKNSV (94 aa)) the chain is Lumenal. The chain crosses the membrane as a helical span at residues 176–196 (ILGLIFSFGVFNRVTFPAFIF). The Cytoplasmic portion of the chain corresponds to 197-210 (LPCLILFWKFYRVH). The helical transmembrane segment at 211–231 (WKSFSLLLLSFSFSSCLFVLI) threads the bilayer. Topologically, residues 232–270 (DTNIYNNGKGFVITPLNNLKYNLNVQNLQVHGLHPRYTH) are lumenal. Residues 271–291 (LLVNLPQIVGPVLLLAIFSGY) form a helical membrane-spanning segment. Topologically, residues 292–295 (KLDK) are cytoplasmic. Residues 296-316 (LSTYAIISGLLFLSFFQHQEL) form a helical membrane-spanning segment. Arginine 317 is a topological domain (lumenal). The helical transmembrane segment at 318–338 (FLVPLVPLLVTNLNWTPLSST) threads the bilayer. The Cytoplasmic portion of the chain corresponds to 339–348 (LVNKKIFKGT). The chain crosses the membrane as a helical span at residues 349–369 (WLLFNIIMAFIMGISHQAGII). At 370–516 (QFLGDYFHFR…GLTVYSIELL (147 aa)) the chain is on the lumenal side. Asparagine 403 and asparagine 452 each carry an N-linked (GlcNAc...) asparagine glycan.

Belongs to the glycosyltransferase 22 family. PIGZ subfamily.

It is found in the endoplasmic reticulum membrane. Its pathway is glycolipid biosynthesis; glycosylphosphatidylinositol-anchor biosynthesis. Its function is as follows. Alpha-1,2-mannosyltransferase involved in glycosylphosphatidylinositol-anchor biosynthesis. Transfers a fourth mannose to trimannosyl-GPIs during GPI precursor assembly. The presence of a fourth mannose in GPI is essential in fungi. Involved in plasmid maintenance with SMP2. The polypeptide is GPI mannosyltransferase 4 (SMP3) (Saccharomyces cerevisiae (strain ATCC 204508 / S288c) (Baker's yeast)).